The chain runs to 143 residues: Transcriptional regulator SlyA (143 aa).

The HTH marR-type domain occupies 2–135; the sequence is ESTLGSDLSR…LTNLVERLEQ (134 aa). The H-T-H motif DNA-binding region spans 49–72; sequence QIQLAKAIGIEQPSLVRTLDQLED.

It belongs to the SlyA family. Homodimer.

Its function is as follows. Transcription regulator that can specifically activate or repress expression of target genes. The chain is Transcriptional regulator SlyA from Edwardsiella tarda.